We begin with the raw amino-acid sequence, 359 residues long: Heat-inducible transcription repressor HrcA (359 aa).

This sequence belongs to the HrcA family.

In terms of biological role, negative regulator of class I heat shock genes (grpE-dnaK-dnaJ and groELS operons). Prevents heat-shock induction of these operons. This chain is Heat-inducible transcription repressor HrcA, found in Rhizobium meliloti (strain 1021) (Ensifer meliloti).